A 332-amino-acid polypeptide reads, in one-letter code: Pyrroline-5-carboxylate reductase (332 aa).

This sequence belongs to the pyrroline-5-carboxylate reductase family.

It catalyses the reaction L-proline + NADP(+) = (S)-1-pyrroline-5-carboxylate + NADPH + 2 H(+). It carries out the reaction L-proline + NAD(+) = (S)-1-pyrroline-5-carboxylate + NADH + 2 H(+). The protein operates within amino-acid biosynthesis; L-proline biosynthesis; L-proline from L-glutamate 5-semialdehyde: step 1/1. The sequence is that of Pyrroline-5-carboxylate reductase (pro-1) from Neurospora crassa (strain ATCC 24698 / 74-OR23-1A / CBS 708.71 / DSM 1257 / FGSC 987).